Consider the following 233-residue polypeptide: Adenylyl cyclase-associated protein 1 (233 aa).

At tyrosine 14 the chain carries Phosphotyrosine. The residue at position 17 (serine 17) is a Phosphoserine. Disordered regions lie at residues 43–71 (VDKX…PSAL) and 91–129 (DEKT…KPVT). Over residues 53–64 (LSGLPSGPSAGS) the composition is skewed to low complexity. At lysine 101 the chain carries N6-methyllysine. 4 positions are modified to phosphoserine: serine 104, serine 115, serine 122, and serine 124. Lysine 151 participates in a covalent cross-link: Glycyl lysine isopeptide (Lys-Gly) (interchain with G-Cter in SUMO1). A C-CAP/cofactor C-like domain is found at 173–221 (VPXISINKXDGRHIYLSKNSLDCEIVSAKSSEMNVLIPTEGGDFNEFPV).

It belongs to the CAP family. Homodimer. Binds actin monomers.

The protein resides in the cell membrane. Directly regulates filament dynamics and has been implicated in a number of complex developmental and morphological processes, including mRNA localization and the establishment of cell polarity. The protein is Adenylyl cyclase-associated protein 1 (CAP1) of Sus scrofa (Pig).